Reading from the N-terminus, the 553-residue chain is Putative transport protein YidE (553 aa).

5 helical membrane-spanning segments follow: residues 4–24 (IALTVSILALVAVVGLFIGNV), 28–48 (GIGLGIGGVLFGGIIVGHFVS), 65–85 (FGLILFVYTIGIQVGPGFFAS), 95–115 (LFAVLIVIIGGLVTAILHKLF), and 158–178 (MSYAMAYPFGICGILFTMWML). 2 RCK C-terminal domains span residues 191 to 276 (QQHE…VIGQ) and 279 to 361 (DTSL…VLGN). Helical transmembrane passes span 371 to 391 (MLPVFIGIGLGVLLGSIPVFV), 393 to 413 (GFPAALKLGLAGGPLIMALIL), 439 to 459 (IVLFLSVVGLKSGGDFVNTLV), 464 to 484 (LSWIGYGALITAVPLITVGIL), 493 to 513 (YLTMCGMLAGSMTDPPALAFA), and 533 to 553 (LVMFLRIITPQLLAVLFWSIG).

This sequence belongs to the AAE transporter (TC 2.A.81) family. YidE subfamily.

The protein localises to the cell membrane. This Escherichia coli (strain ATCC 8739 / DSM 1576 / NBRC 3972 / NCIMB 8545 / WDCM 00012 / Crooks) protein is Putative transport protein YidE.